The primary structure comprises 707 residues: GDNF-inducible zinc finger protein 1 (707 aa).

The BTB domain maps to 31–103 (CDVTVIVDYQ…VYTARVRVKE (73 aa)). Residues 149-165 (VEASSGPQVSVTPSSKA) are compositionally biased toward polar residues. Disordered stretches follow at residues 149–221 (VEAS…PKIR) and 243–309 (RRLR…KDGE). Basic and acidic residues-rich tracts occupy residues 198 to 213 (PSKK…KDVA), 243 to 278 (RRLR…EPAS), and 287 to 298 (VEREESLQKVEG). C2H2-type zinc fingers lie at residues 316 to 338 (FQCT…IKYH), 347 to 370 (YRCD…RHVH), 376 to 399 (FPCE…LQVH), 406 to 428 (HRCG…ERTH), 434 to 456 (YGCT…LRVH), 462 to 484 (FVCD…KRCH), 490 to 512 (FMCE…NRIH), 518 to 540 (FKCE…IKVH), 546 to 568 (YCCD…HRIH), and 574 to 596 (YMCN…TSIH). S612 bears the Phosphoserine mark.

It belongs to the krueppel C2H2-type zinc-finger protein family. Interacts with NCL.

Its subcellular location is the cytoplasm. It is found in the nucleus. It localises to the nucleoplasm. The protein localises to the nucleolus. Its function is as follows. Transcriptional repressor that binds the GZF1 responsive element (GRE) (consensus: 5'-TGCGCN[TG][CA]TATA-3'). May be regulating VSX2/HOX10 expression. The chain is GDNF-inducible zinc finger protein 1 (Gzf1) from Rattus norvegicus (Rat).